The chain runs to 440 residues: Oligodendrocyte-myelin glycoprotein (440 aa).

The N-terminal stretch at 1-24 (MEYQILKMSLCLFILLFLTPGILC) is a signal peptide. The LRRNT domain maps to 25 to 55 (ICPLQCICTERHRHVDCSGRNLSTLPSGLQE). N-linked (GlcNAc...) asparagine glycans are attached at residues N45 and N61. 8 LRR repeats span residues 56–77 (NIIH…LTQY), 79–100 (NLRT…LPRS), 101–121 (LWNM…DTAY), 124–145 (NLKY…KNTL), 147–168 (SLEV…MPSK), 169–189 (LHIV…TLIN), 192–213 (NLTH…SFDQ), and 216–239 (QLQE…TYLL). An N-linked (GlcNAc...) asparagine glycan is attached at N103. N152, N176, N189, N192, and N234 each carry an N-linked (GlcNAc...) asparagine glycan. Ser/Thr-rich repeat units follow at residues 229-270 (CDHK…YPTP), 271-292 (SGFT…INSL), 293-335 (SVVT…VPYP), 336-377 (EDTS…SPTP), and 378-416 (MTLS…TPLP). N-linked (GlcNAc...) asparagine glycans are attached at residues N364 and N389. A lipid anchor (GPI-anchor amidated serine) is attached at S417. Residues 418–440 (VANAWKVNASFLLLLNVVVMLAV) constitute a propeptide, removed in mature form. N425 carries N-linked (GlcNAc...) asparagine glycosylation.

As to quaternary structure, binds to RTN4R. In terms of processing, O-glycosylated in its Ser/Thr-rich repeat domain. As to expression, oligodendrocytes and myelin of the central nervous system.

It is found in the cell membrane. Functionally, cell adhesion molecule contributing to the interactive process required for myelination in the central nervous system. This is Oligodendrocyte-myelin glycoprotein (OMG) from Homo sapiens (Human).